We begin with the raw amino-acid sequence, 61 residues long: Chromatin protein Cren7 (61 aa).

The protein belongs to the Cren7 family. In terms of assembly, monomer. In terms of processing, methylated at multiple sites, to varying extents.

It is found in the chromosome. The protein resides in the cytoplasm. Functionally, a chromatin protein, binds double-stranded DNA without sequence specificity. Constrains negative DNA supercoils. In Caldivirga maquilingensis (strain ATCC 700844 / DSM 13496 / JCM 10307 / IC-167), this protein is Chromatin protein Cren7.